A 363-amino-acid polypeptide reads, in one-letter code: NAD(P)H-quinone oxidoreductase subunit 1, chloroplastic (363 aa).

Transmembrane regions (helical) follow at residues 30-50 (LVPI…IVWL), 98-118 (FSIG…VIPF), 129-149 (IGIF…LMSG), 248-268 (YSGI…LLSS), 300-320 (IIGT…FLFI), and 343-363 (FLLP…LLSL).

The protein belongs to the complex I subunit 1 family. In terms of assembly, NDH is composed of at least 16 different subunits, 5 of which are encoded in the nucleus.

The protein resides in the plastid. It localises to the chloroplast thylakoid membrane. It carries out the reaction a plastoquinone + NADH + (n+1) H(+)(in) = a plastoquinol + NAD(+) + n H(+)(out). It catalyses the reaction a plastoquinone + NADPH + (n+1) H(+)(in) = a plastoquinol + NADP(+) + n H(+)(out). Its function is as follows. NDH shuttles electrons from NAD(P)H:plastoquinone, via FMN and iron-sulfur (Fe-S) centers, to quinones in the photosynthetic chain and possibly in a chloroplast respiratory chain. The immediate electron acceptor for the enzyme in this species is believed to be plastoquinone. Couples the redox reaction to proton translocation, and thus conserves the redox energy in a proton gradient. This is NAD(P)H-quinone oxidoreductase subunit 1, chloroplastic from Gossypium barbadense (Sea Island cotton).